A 92-amino-acid polypeptide reads, in one-letter code: Putative regulatory protein CKL_1364 (92 aa).

It belongs to the RemA family.

This is Putative regulatory protein CKL_1364 from Clostridium kluyveri (strain ATCC 8527 / DSM 555 / NBRC 12016 / NCIMB 10680 / K1).